We begin with the raw amino-acid sequence, 148 residues long: Putative antiporter subunit mnhG2 (148 aa).

A run of 3 helical transmembrane segments spans residues 11–31 (IAAI…IGLI), 51–71 (VLLT…YLSV), and 72–92 (RLIL…HLIS). A disordered region spans residues 125-148 (EQLKQRAHEREERRRKTYEKEHDY). Positions 127–148 (LKQRAHEREERRRKTYEKEHDY) are enriched in basic and acidic residues.

Belongs to the CPA3 antiporters (TC 2.A.63) subunit G family. As to quaternary structure, may form a heterooligomeric complex that consists of seven subunits: mnhA2, mnhB2, mnhC2, mnhD2, mnhE2, mnhF2 and mnhG2.

The protein resides in the cell membrane. The chain is Putative antiporter subunit mnhG2 (mnhG2) from Staphylococcus saprophyticus subsp. saprophyticus (strain ATCC 15305 / DSM 20229 / NCIMB 8711 / NCTC 7292 / S-41).